Consider the following 316-residue polypeptide: Apolipoprotein E (316 aa).

The N-terminal stretch at 1-18 is a signal peptide; that stretch reads MKALWAVLVVTLLAGCLA. Tandem repeats lie at residues 76-97, 98-119, 120-141, 142-163, 164-185, 186-207, 208-229, and 230-251. The 8 X 22 AA approximate tandem repeats stretch occupies residues 76 to 251; sequence VLMEDTMTEL…RLEEVREQME (176 aa). Met139 carries the methionine sulfoxide modification. Position 143 is a phosphoserine (Ser143). The segment at 154 to 164 is LDL and other lipoprotein receptors binding; sequence HLRKLRKRLMR. 158 to 161 serves as a coordination point for heparin; that stretch reads LRKR. The segment at 206-286 is lipid-binding and lipoprotein association; that stretch reads TANLGAGAAQ…GWFEPLVEDM (81 aa). 225-232 contributes to the heparin binding site; that stretch reads GARIRGRL. Residues 262-316 form a homooligomerization region; the sequence is QQMRLQAEIFQTRLKGWFEPLVEDMQRQWANLMEKIQASVATNPIPPSSVPQESQ. The interval 274 to 286 is specificity for association with VLDL; the sequence is RLKGWFEPLVEDM.

The protein belongs to the apolipoprotein A1/A4/E family. Homotetramer. May interact with ABCA1; functionally associated with ABCA1 in the biogenesis of HDLs. May interact with APP/A4 amyloid-beta peptide; the interaction is extremely stable in vitro but its physiological significance is unclear. May interact with MAPT. May interact with MAP2. In the cerebrospinal fluid, interacts with secreted SORL1. Interacts with PMEL; this allows the loading of PMEL luminal fragment on ILVs to induce fibril nucleation. APOE exists as multiple glycosylated and sialylated glycoforms within cells and in plasma. The extent of glycosylation and sialylation are tissue and context specific. Post-translationally, glycated in plasma VLDL. In terms of processing, phosphorylated by FAM20C in the extracellular medium.

The protein resides in the secreted. It localises to the extracellular space. The protein localises to the extracellular matrix. It is found in the extracellular vesicle. Its subcellular location is the endosome. The protein resides in the multivesicular body. Functionally, APOE is an apolipoprotein, a protein associating with lipid particles, that mainly functions in lipoprotein-mediated lipid transport between organs via the plasma and interstitial fluids. APOE is a core component of plasma lipoproteins and is involved in their production, conversion and clearance. Apolipoproteins are amphipathic molecules that interact both with lipids of the lipoprotein particle core and the aqueous environment of the plasma. As such, APOE associates with chylomicrons, chylomicron remnants, very low density lipoproteins (VLDL) and intermediate density lipoproteins (IDL) but shows a preferential binding to high-density lipoproteins (HDL). It also binds a wide range of cellular receptors including the LDL receptor/LDLR, the LDL receptor-related proteins LRP1, LRP2 and LRP8 and the very low-density lipoprotein receptor/VLDLR that mediate the cellular uptake of the APOE-containing lipoprotein particles. Finally, APOE also has a heparin-binding activity and binds heparan-sulfate proteoglycans on the surface of cells, a property that supports the capture and the receptor-mediated uptake of APOE-containing lipoproteins by cells. A main function of APOE is to mediate lipoprotein clearance through the uptake of chylomicrons, VLDLs, and HDLs by hepatocytes. APOE is also involved in the biosynthesis by the liver of VLDLs as well as their uptake by peripheral tissues ensuring the delivery of triglycerides and energy storage in muscle, heart and adipose tissues. By participating in the lipoprotein-mediated distribution of lipids among tissues, APOE plays a critical role in plasma and tissues lipid homeostasis. APOE is also involved in two steps of reverse cholesterol transport, the HDLs-mediated transport of cholesterol from peripheral tissues to the liver, and thereby plays an important role in cholesterol homeostasis. First, it is functionally associated with ABCA1 in the biogenesis of HDLs in tissues. Second, it is enriched in circulating HDLs and mediates their uptake by hepatocytes. APOE also plays an important role in lipid transport in the central nervous system, regulating neuron survival and sprouting. This is Apolipoprotein E (APOE) from Microtus ochrogaster (Prairie vole).